We begin with the raw amino-acid sequence, 56 residues long: Aspartyl-phosphate phosphatase YisI (56 aa).

Belongs to the spo0E family.

Aspartyl-phosphate phosphatase which specifically dephosphorylates the sporulation transcription factor Spo0A-P and negatively regulates the sporulation initiation pathway in order to control the proper timing of sporulation. This chain is Aspartyl-phosphate phosphatase YisI (yisI), found in Bacillus subtilis (strain 168).